The chain runs to 332 residues: L-lactate dehydrogenase A chain (332 aa).

N-acetylalanine is present on alanine 2. Residue lysine 5 is modified to N6-acetyllysine; alternate. Lysine 5 is subject to N6-succinyllysine; alternate. N6-acetyllysine is present on lysine 14. NAD(+) is bound at residue glycine 29 to lysine 57. Position 57 is an N6-acetyllysine; alternate (lysine 57). Lysine 57 is covalently cross-linked (Glycyl lysine isopeptide (Lys-Gly) (interchain with G-Cter in SUMO2); alternate). An N6-acetyllysine modification is found at lysine 81. Arginine 106 contacts substrate. At lysine 118 the chain carries N6-acetyllysine; alternate. Position 118 is an N6-succinyllysine; alternate (lysine 118). N6-acetyllysine is present on lysine 126. Asparagine 138 serves as a coordination point for NAD(+). Residues asparagine 138 and arginine 169 each coordinate substrate. Histidine 193 acts as the Proton acceptor in catalysis. 2 positions are modified to N6-acetyllysine: lysine 224 and lysine 232. Position 239 is a phosphotyrosine (tyrosine 239). Residue lysine 243 is modified to N6-acetyllysine. Threonine 248 provides a ligand contact to substrate. Threonine 309 is subject to Phosphothreonine. The residue at position 318 (lysine 318) is an N6-acetyllysine; alternate. At lysine 318 the chain carries N6-succinyllysine; alternate. Position 322 is a phosphothreonine (threonine 322).

It belongs to the LDH/MDH superfamily. LDH family. Homotetramer. Interacts with PTEN upstream reading frame protein MP31. In terms of processing, ISGylated.

The protein localises to the cytoplasm. It carries out the reaction (S)-lactate + NAD(+) = pyruvate + NADH + H(+). It functions in the pathway fermentation; pyruvate fermentation to lactate; (S)-lactate from pyruvate: step 1/1. In terms of biological role, interconverts simultaneously and stereospecifically pyruvate and lactate with concomitant interconversion of NADH and NAD(+). The polypeptide is L-lactate dehydrogenase A chain (LDHA) (Bos taurus (Bovine)).